Consider the following 182-residue polypeptide: Cytidylate kinase (182 aa).

7-15 (GPPGSGKSS) serves as a coordination point for ATP.

The protein belongs to the cytidylate kinase family. Type 2 subfamily.

The protein resides in the cytoplasm. The catalysed reaction is CMP + ATP = CDP + ADP. It carries out the reaction dCMP + ATP = dCDP + ADP. This Sulfolobus acidocaldarius (strain ATCC 33909 / DSM 639 / JCM 8929 / NBRC 15157 / NCIMB 11770) protein is Cytidylate kinase (cmk).